We begin with the raw amino-acid sequence, 327 residues long: Tagatose 1,6-diphosphate aldolase 2 (327 aa).

This sequence belongs to the aldolase LacD family.

It catalyses the reaction D-tagatofuranose 1,6-bisphosphate = D-glyceraldehyde 3-phosphate + dihydroxyacetone phosphate. It participates in carbohydrate metabolism; D-tagatose 6-phosphate degradation; D-glyceraldehyde 3-phosphate and glycerone phosphate from D-tagatose 6-phosphate: step 2/2. This chain is Tagatose 1,6-diphosphate aldolase 2, found in Streptococcus pyogenes serotype M6 (strain ATCC BAA-946 / MGAS10394).